A 198-amino-acid chain; its full sequence is A-type ATP synthase subunit E (198 aa).

This sequence belongs to the V-ATPase E subunit family. As to quaternary structure, has multiple subunits with at least A(3), B(3), C, D, E, F, H, I and proteolipid K(x).

The protein localises to the cell membrane. Its function is as follows. Component of the A-type ATP synthase that produces ATP from ADP in the presence of a proton gradient across the membrane. In Pyrococcus horikoshii (strain ATCC 700860 / DSM 12428 / JCM 9974 / NBRC 100139 / OT-3), this protein is A-type ATP synthase subunit E.